Consider the following 61-residue polypeptide: MITALTALLVLISLALVVTVPVALATPGEWESSKDQFNKAFQLWVGLVVAIATADGISSSI.

2 helical membrane passes run 5–25 and 38–58; these read LTALLVLISLALVVTVPVALA and NKAFQLWVGLVVAIATADGIS.

Belongs to the PsbZ family. PSII is composed of 1 copy each of membrane proteins PsbA, PsbB, PsbC, PsbD, PsbE, PsbF, PsbH, PsbI, PsbJ, PsbK, PsbL, PsbM, PsbT, PsbX, PsbY, PsbZ, Psb30/Ycf12, at least 3 peripheral proteins of the oxygen-evolving complex and a large number of cofactors. It forms dimeric complexes.

The protein resides in the plastid. The protein localises to the chloroplast thylakoid membrane. Functionally, may control the interaction of photosystem II (PSII) cores with the light-harvesting antenna, regulates electron flow through the 2 photosystem reaction centers. PSII is a light-driven water plastoquinone oxidoreductase, using light energy to abstract electrons from H(2)O, generating a proton gradient subsequently used for ATP formation. In Skeletonema costatum (Marine centric diatom), this protein is Photosystem II reaction center protein Z.